Here is a 456-residue protein sequence, read N- to C-terminus: MADDSATPGVRVPSHRYGRHYHRRKIKEAVDSISSLPDVILQHILSFIPTKLAITTSLLSKRWRHVWCDTPSLSFNDYRLEAPFIDETLTRYTASKMMRFHLHTSLINNVPHLESWIKFAMSRNVDHLSLDLWNQVANKFKFPDFFHINSSLKQLTVVLDFSDTMIAICLKKLYLSTCLLSDESMANILFGCPILESLTLDHCGGLRVLDLSKSLRLRTLEINCNIWVPELTAMQIVAPHTHCLRLRNSKLPCSLVDVSSLKEAKLNICIDSFSKTIKADFLQVTLLKMLEKLHNVEKLTLGGNFLQILSVAELRGVPFPMFKVKDLTLETVIFQYVIPGIERVLQNSPDLKKLTLLTKDFYHKPGEYLGDHMDLEGFNLDQCWKSKYGVFWNKSCLDVESEHVVSFVELMLKNTKALDKMVVLLEDHYVRFKEMVPRLSHNYNISIALYTFKPQS.

The F-box domain occupies 30–78 (VDSISSLPDVILQHILSFIPTKLAITTSLLSKRWRHVWCDTPSLSFNDY). 6 LRR repeats span residues 177–202 (TCLL…TLDH), 203–213 (CGGLRVLDLSK), 228–253 (VPEL…KLPC), 278–303 (KADF…TLGG), 333–358 (IFQY…TLLT), and 396–422 (CLDV…DKMV).

This Arabidopsis thaliana (Mouse-ear cress) protein is Putative F-box/LRR-repeat protein At3g18150.